Reading from the N-terminus, the 189-residue chain is Cytochrome b6-f complex subunit 4 (189 aa).

The next 3 membrane-spanning stretches (helical) occupy residues 36–56 (LSYIFPVVILGTIACTIGLAV), 103–123 (LLGVLLMASVPAGSLTVPFLE), and 139–159 (TVSLIGTAVALWLGIGAALPI).

Belongs to the cytochrome b family. PetD subfamily. As to quaternary structure, the 4 large subunits of the cytochrome b6-f complex are cytochrome b6, subunit IV (17 kDa polypeptide, petD), cytochrome f and the Rieske protein, while the 4 small subunits are petG, petL, petM and petN. The complex functions as a dimer.

It localises to the plastid. The protein resides in the chloroplast thylakoid membrane. Its function is as follows. Component of the cytochrome b6-f complex, which mediates electron transfer between photosystem II (PSII) and photosystem I (PSI), cyclic electron flow around PSI, and state transitions. This Pinus koraiensis (Korean pine) protein is Cytochrome b6-f complex subunit 4.